The primary structure comprises 319 residues: Homoserine dehydrogenase (319 aa).

Positions 10, 12, 13, 40, 57, 92, 93, 114, and 116 each coordinate NADPH. V13 contacts NAD(+). Residues V13 and R40 each coordinate NADP(+). S92 serves as a coordination point for NAD(+). S92 contacts NADP(+). The NADP(+) site is built by S114 and K116. The Na(+) site is built by E140, V143, A145, and T147. Residues G197 and E200 each contribute to the NADP(+) site. The L-homoserine site is built by E200 and D211. The Proton donor role is filled by K215. NADPH is bound at residue G296. G296 is a binding site for NAD(+). G296 is an NADP(+) binding site.

This sequence belongs to the homoserine dehydrogenase family. In terms of assembly, homodimer. The cofactor is a metal cation.

It catalyses the reaction L-homoserine + NAD(+) = L-aspartate 4-semialdehyde + NADH + H(+). It functions in the pathway amino-acid biosynthesis; L-methionine biosynthesis via de novo pathway; L-homoserine from L-aspartate: step 3/3. The protein operates within amino-acid biosynthesis; L-threonine biosynthesis; L-threonine from L-aspartate: step 3/5. Functionally, catalyzes the conversion of L-aspartate-beta-semialdehyde (L-Asa) to L-homoserine (L-Hse), the third step in the biosynthesis of threonine and methionine from aspartate. Utilizes NADH but not NADPH as coenzyme. This Pyrococcus horikoshii (strain ATCC 700860 / DSM 12428 / JCM 9974 / NBRC 100139 / OT-3) protein is Homoserine dehydrogenase.